The following is a 416-amino-acid chain: Chaperone protein dnaJ A6 (416 aa).

In terms of domain architecture, J spans 12-73; that stretch reads KYYEVLGVPK…EKRDIYDQYG (62 aa). The segment at 133–217 adopts a CR-type zinc-finger fold; the sequence is GSMKKLSLSR…CRASKVIQEK (85 aa). Cys146, Cys149, Cys162, Cys165, Cys189, Cys192, Cys205, and Cys208 together coordinate Zn(2+). CXXCXGXG motif repeat units follow at residues 146–153, 162–169, and 189–196; these read CPKCKGKG, CYGCHGVG, and CPECRGSG. A compositionally biased stretch (basic and acidic residues) spans 380–399; it reads HDVNIEEEMRRKQYQRKQEA. The tract at residues 380–416 is disordered; that stretch reads HDVNIEEEMRRKQYQRKQEAYDEDEEEDAPRVQCAQQ.

It belongs to the DnaJ family. As to quaternary structure, interacts with ZFP1.

It is found in the nucleus. It localises to the cytoplasm. In terms of biological role, involved in disease resistance. Acts as a negative regulator of innate immunity to the rice blast fungus (Magnaporthe oryzae). Acts as a negative regulator of the pathogen-associated molecular pattern (PAMP)-triggered immunity (PTI) response through the inhibition of reactive oxygen species (ROS) accumulation and expression of defense-related genes. May function via the ubiquitin-proteasome degradation pathway. The protein is Chaperone protein dnaJ A6 of Oryza sativa subsp. japonica (Rice).